A 322-amino-acid chain; its full sequence is Protein-L-isoaspartate O-methyltransferase (322 aa).

The tract at residues methionine 1–proline 101 is disordered. The span at glutamate 14–glutamate 29 shows a compositional bias: basic and acidic residues. Composition is skewed to low complexity over residues alanine 33–alanine 51 and alanine 67–glycine 91. Residue serine 170 is part of the active site.

The protein belongs to the methyltransferase superfamily. L-isoaspartyl/D-aspartyl protein methyltransferase family.

The protein localises to the cytoplasm. It carries out the reaction [protein]-L-isoaspartate + S-adenosyl-L-methionine = [protein]-L-isoaspartate alpha-methyl ester + S-adenosyl-L-homocysteine. Catalyzes the methyl esterification of L-isoaspartyl residues in peptides and proteins that result from spontaneous decomposition of normal L-aspartyl and L-asparaginyl residues. It plays a role in the repair and/or degradation of damaged proteins. This is Protein-L-isoaspartate O-methyltransferase from Burkholderia pseudomallei (strain 668).